The chain runs to 199 residues: Dephospho-CoA kinase (199 aa).

The region spanning 3 to 199 (VLGLTGSIGM…AAARMPRRRP (197 aa)) is the DPCK domain. Residue 11–16 (GMGKST) coordinates ATP.

The protein belongs to the CoaE family.

It is found in the cytoplasm. It carries out the reaction 3'-dephospho-CoA + ATP = ADP + CoA + H(+). The protein operates within cofactor biosynthesis; coenzyme A biosynthesis; CoA from (R)-pantothenate: step 5/5. Its function is as follows. Catalyzes the phosphorylation of the 3'-hydroxyl group of dephosphocoenzyme A to form coenzyme A. The chain is Dephospho-CoA kinase from Rhodopseudomonas palustris (strain HaA2).